The chain runs to 310 residues: Proline iminopeptidase (310 aa).

Residues 33-290 form the AB hydrolase-1 domain; that stretch reads PVIFLHGGPG…RVVQAGHRAF (258 aa). Serine 107 (nucleophile) is an active-site residue. The active site involves aspartate 260. The active-site Proton donor is the histidine 287.

This sequence belongs to the peptidase S33 family.

Its subcellular location is the cytoplasm. It catalyses the reaction Release of N-terminal proline from a peptide.. Functionally, specifically catalyzes the removal of N-terminal proline residues from peptides. The sequence is that of Proline iminopeptidase (pip) from Neisseria meningitidis serogroup B (strain ATCC BAA-335 / MC58).